The chain runs to 246 residues: Triosephosphate isomerase (246 aa).

Residue 9–11 (NWK) coordinates substrate. Residue H95 is the Electrophile of the active site. The active-site Proton acceptor is E165. Residues G171, S210, and 231 to 232 (GG) contribute to the substrate site.

This sequence belongs to the triosephosphate isomerase family. Homodimer.

The protein resides in the cytoplasm. The enzyme catalyses D-glyceraldehyde 3-phosphate = dihydroxyacetone phosphate. The protein operates within carbohydrate biosynthesis; gluconeogenesis. It functions in the pathway carbohydrate degradation; glycolysis; D-glyceraldehyde 3-phosphate from glycerone phosphate: step 1/1. Functionally, involved in the gluconeogenesis. Catalyzes stereospecifically the conversion of dihydroxyacetone phosphate (DHAP) to D-glyceraldehyde-3-phosphate (G3P). The polypeptide is Triosephosphate isomerase (Thermodesulfovibrio yellowstonii (strain ATCC 51303 / DSM 11347 / YP87)).